The sequence spans 117 residues: UPF0342 protein BcerKBAB4_0767 (117 aa).

The protein belongs to the UPF0342 family.

The polypeptide is UPF0342 protein BcerKBAB4_0767 (Bacillus mycoides (strain KBAB4) (Bacillus weihenstephanensis)).